Consider the following 396-residue polypeptide: Metacaspase-1 (396 aa).

Residues 1–20 (MSGYPGQGYQGQGYGQGYGQ) are compositionally biased toward gly residues. The disordered stretch occupies residues 1 to 86 (MSGYPGQGYQ…PQGMQQFGHG (86 aa)). The span at 47 to 62 (HYQYGPPQGGYQYPPQ) shows a compositional bias: low complexity. Over residues 72–81 (QAHQPPQGMQ) the composition is skewed to polar residues. Residues histidine 186 and cysteine 242 contribute to the active site.

This sequence belongs to the peptidase C14B family.

Functionally, involved in cell death (apoptosis). The chain is Metacaspase-1 (MCA1) from Pyricularia oryzae (strain 70-15 / ATCC MYA-4617 / FGSC 8958) (Rice blast fungus).